The following is a 96-amino-acid chain: (4S)-4-hydroxy-5-phosphonooxypentane-2,3-dione isomerase (96 aa).

The ABM domain occupies 2–91 (HVTLVEINVH…MTGPRKKRLF (90 aa)).

It belongs to the LsrG family. As to quaternary structure, homodimer.

The protein localises to the cytoplasm. The enzyme catalyses (2S)-2-hydroxy-3,4-dioxopentyl phosphate = 3-hydroxy-2,4-dioxopentyl phosphate. Involved in the degradation of phospho-AI-2, thereby terminating induction of the lsr operon and closing the AI-2 signaling cycle. Catalyzes the conversion of (4S)-4-hydroxy-5-phosphonooxypentane-2,3-dione (P-DPD) to 3-hydroxy-5-phosphonooxypentane-2,4-dione (P-HPD). The protein is (4S)-4-hydroxy-5-phosphonooxypentane-2,3-dione isomerase of Escherichia coli O157:H7.